The sequence spans 220 residues: Metalloproteinase inhibitor 2 (220 aa).

Residues 1-26 (MGAAARSLPLAFCLLLLGTLLPRADA) form the signal peptide. Cys-27 serves as a coordination point for Zn(2+). The segment at 27 to 30 (CSCS) is involved in metalloproteinase-binding. Cystine bridges form between Cys-27–Cys-98, Cys-29–Cys-127, Cys-39–Cys-152, Cys-154–Cys-201, Cys-159–Cys-164, and Cys-172–Cys-193. Residues 27-152 (CSCSPVHPQQ…SLNHRYQMGC (126 aa)) form the NTR domain.

It belongs to the protease inhibitor I35 (TIMP) family. Interacts (via the C-terminal) with MMP2 (via the C-terminal PEX domain); the interaction inhibits the MMP2 activity. The activity of TIMP2 is dependent on the presence of disulfide bonds.

The protein localises to the secreted. Complexes with metalloproteinases (such as collagenases) and irreversibly inactivates them by binding to their catalytic zinc cofactor. The chain is Metalloproteinase inhibitor 2 (TIMP2) from Bos taurus (Bovine).